The primary structure comprises 448 residues: Inositol hexakisphosphate kinase 2 (448 aa).

ATP-binding positions include 229-231 (ENL) and Asp242. Substrate contacts are provided by residues 238 to 246 (PCVLDLKMG), Lys244, and 258 to 265 (KAANQIRK). Asp405 lines the ATP pocket. His408 lines the substrate pocket.

This sequence belongs to the inositol phosphokinase (IPK) family. As to expression, highly expressed in brain and lung, and at slightly lower levels in liver, kidney and testis.

It localises to the nucleus. The catalysed reaction is 1D-myo-inositol hexakisphosphate + ATP = 5-diphospho-1D-myo-inositol 1,2,3,4,6-pentakisphosphate + ADP. It functions in the pathway phospholipid metabolism; phosphatidylinositol metabolism. Functionally, converts inositol hexakisphosphate (InsP6) to diphosphoinositol pentakisphosphate (InsP7/PP-InsP5). May play a role in the regulation of Na(+)-dependent phosphate cotransport, possibly via its role in diphosphoinositol pentakisphosphate (InsP7/PP-InsP5) biosynthesis. In Mus musculus (Mouse), this protein is Inositol hexakisphosphate kinase 2 (Ip6k2).